The chain runs to 88 residues: Putative defensin-like protein 228 (88 aa).

An N-terminal signal peptide occupies residues 1–27 (MMKSAILLMVSCVFMFLVVSYIQDVEG). 4 disulfides stabilise this stretch: Cys32–Cys88, Cys42–Cys66, Cys50–Cys82, and Cys64–Cys84.

It belongs to the DEFL family.

It localises to the secreted. The polypeptide is Putative defensin-like protein 228 (SCRL3) (Arabidopsis thaliana (Mouse-ear cress)).